Reading from the N-terminus, the 943-residue chain is Translation initiation factor IF-2 (943 aa).

Over residues 99 to 113 (VKAAQTQAAPVQPEQ) the composition is skewed to low complexity. The interval 99–354 (VKAAQTQAAP…LEPNQHAFQA (256 aa)) is disordered. Basic and acidic residues predominate over residues 117 to 141 (DAVKARAEAAARAEARAKAEAEAAK). Over residues 145-172 (AKAGNKAKPAAQKPTEAKAETAPVAAET) the composition is skewed to low complexity. The segment covering 173-197 (KPAEPKEKAVKPKHERNGKGKDAKK) has biased composition (basic and acidic residues). The span at 200–215 (KPAAPAVPQPVVSAEE) shows a compositional bias: low complexity. A compositionally biased stretch (basic and acidic residues) spans 216-250 (QAQRDEEARRAAALRAHQEALLKEKQERQARREAM). Residues 251-264 (KQQAEQQAKAAQEA) are compositionally biased toward low complexity. Basic and acidic residues-rich tracts occupy residues 295-308 (AKKE…DEGQ) and 319-335 (GGRD…ERVR). In terms of domain architecture, tr-type G spans 443–612 (PRPPVVTVMG…LLEAEVLELT (170 aa)). A G1 region spans residues 452–459 (GHVDHGKT). A GTP-binding site is contributed by 452 to 459 (GHVDHGKT). Residues 477–481 (GITQH) are G2. The segment at 498–501 (DTPG) is G3. GTP-binding positions include 498–502 (DTPGH) and 552–555 (NKID). A G4 region spans residues 552–555 (NKID). The tract at residues 588–590 (SAK) is G5.

The protein belongs to the TRAFAC class translation factor GTPase superfamily. Classic translation factor GTPase family. IF-2 subfamily.

It is found in the cytoplasm. Its function is as follows. One of the essential components for the initiation of protein synthesis. Protects formylmethionyl-tRNA from spontaneous hydrolysis and promotes its binding to the 30S ribosomal subunits. Also involved in the hydrolysis of GTP during the formation of the 70S ribosomal complex. In Neisseria gonorrhoeae (strain NCCP11945), this protein is Translation initiation factor IF-2.